A 307-amino-acid chain; its full sequence is Protoheme IX farnesyltransferase (307 aa).

The next 9 helical transmembrane spans lie at 31-51, 55-75, 103-123, 125-145, 153-173, 179-199, 223-243, 246-266, and 285-305; these read VTQLAVFCAIIGMFLATPGMV, VLIGGAAGIWLLAGAAFAINC, TLVFSAILGGAGMWLLHVYAN, LTMWLTFATFLGYAVVYTILL, IVIGGLSGAMPPALGWAAVAG, AWFLVLIIFTWTPPHFWALAL, LLHILLYTLIMIAATLLPFVY, SGYIYLAAALALGAGFLAYAW, and ILYLSLLFAALLVDHYFKFVP.

The protein belongs to the UbiA prenyltransferase family. Protoheme IX farnesyltransferase subfamily.

It is found in the cell inner membrane. The catalysed reaction is heme b + (2E,6E)-farnesyl diphosphate + H2O = Fe(II)-heme o + diphosphate. Its pathway is porphyrin-containing compound metabolism; heme O biosynthesis; heme O from protoheme: step 1/1. In terms of biological role, converts heme B (protoheme IX) to heme O by substitution of the vinyl group on carbon 2 of heme B porphyrin ring with a hydroxyethyl farnesyl side group. The polypeptide is Protoheme IX farnesyltransferase (Cupriavidus necator (strain ATCC 17699 / DSM 428 / KCTC 22496 / NCIMB 10442 / H16 / Stanier 337) (Ralstonia eutropha)).